Reading from the N-terminus, the 502-residue chain is CBL-interacting protein kinase 11 (502 aa).

One can recognise a Protein kinase domain in the interval 12–267; the sequence is YEVGKQLGQG…IPRIKRSTWY (256 aa). Residues 18–26 and lysine 41 each bind ATP; that span reads LGQGTFAKV. Catalysis depends on aspartate 135, which acts as the Proton acceptor. The activation loop stretch occupies residues 153-182; sequence DFGLSALAESKRQDGLLHTTCGTPAYVAPE. Positions 297–333 constitute an NAF domain; it reads AECSTSEENQGSLSLPNLNAFDIISLSTGFNLSGFFE. Positions 339-367 are PPI; that stretch reads QEERFTTRQPVTTVLGKLKELAKRLKLKV. A disordered region spans residues 447-502; the sequence is LQGEQQQSPLPPELPQDQLQPSLPQQEKQDMPEPPLLPQVPQEEVQTSIPAEQTKN. The segment covering 461–472 has biased composition (low complexity); the sequence is PQDQLQPSLPQQ. Residues 493 to 502 are compositionally biased toward polar residues; sequence TSIPAEQTKN.

The protein belongs to the protein kinase superfamily. CAMK Ser/Thr protein kinase family. SNF1 subfamily. Requires Mn(2+) as cofactor.

It catalyses the reaction L-seryl-[protein] + ATP = O-phospho-L-seryl-[protein] + ADP + H(+). The catalysed reaction is L-threonyl-[protein] + ATP = O-phospho-L-threonyl-[protein] + ADP + H(+). CIPK serine-threonine protein kinases interact with CBL proteins. Binding of a CBL protein to the regulatory NAF domain of CIPK protein lead to the activation of the kinase in a calcium-dependent manner. This chain is CBL-interacting protein kinase 11 (CIPK11), found in Oryza sativa subsp. japonica (Rice).